The following is a 269-amino-acid chain: Bis(5'-nucleosyl)-tetraphosphatase, symmetrical (269 aa).

The protein belongs to the Ap4A hydrolase family.

It carries out the reaction P(1),P(4)-bis(5'-adenosyl) tetraphosphate + H2O = 2 ADP + 2 H(+). Functionally, hydrolyzes diadenosine 5',5'''-P1,P4-tetraphosphate to yield ADP. In Vibrio vulnificus (strain YJ016), this protein is Bis(5'-nucleosyl)-tetraphosphatase, symmetrical.